The chain runs to 96 residues: UPF0235 protein CAB243 (96 aa).

This sequence belongs to the UPF0235 family.

This is UPF0235 protein CAB243 from Chlamydia abortus (strain DSM 27085 / S26/3) (Chlamydophila abortus).